The following is a 145-amino-acid chain: Protein BUD31 homolog 3 (145 aa).

Belongs to the BUD31 (G10) family.

Its subcellular location is the nucleus. This Oryza sativa subsp. japonica (Rice) protein is Protein BUD31 homolog 3.